A 444-amino-acid polypeptide reads, in one-letter code: Viral protein kinase (444 aa).

Residues 1-25 (MRWKRMERRPPLTPLRRSRTQSSGG) form a disordered region. Residues 90 to 98 (LGRGAFGII) and K108 contribute to the ATP site. The active-site Proton acceptor is the D201.

Interacts with protein K-bZIP/K8. Interacts with host beta-catenin/CTNNB1. In terms of processing, AUtophosphorylated.

The protein localises to the host nucleus. The enzyme catalyses L-seryl-[protein] + ATP = O-phospho-L-seryl-[protein] + ADP + H(+). It carries out the reaction L-threonyl-[protein] + ATP = O-phospho-L-threonyl-[protein] + ADP + H(+). Functionally, serine/threonine protein kinase that plays a role in viral gene expression, viral DNA replication and encapsidation, and nuclear egress of virions. Regulates host transcriptional activity through interactions with RNA helicase and c-Jun N-terminal kinase (JNK) and viral transcriptional activity through interactions with the viral protein K-bZIP/K8. Induces host chromosome condensation and phosphorylation of histone H3. Phosphorylates the DNA polymerase processivity factor hence modulating its processivity function. Inhibits the host Wnt signaling pathway via direct interactions with beta-catenin/CTNNB1 while the kinase activity of vPK is not required for this inhibitory activity. Also phosphorylates host SAMHD1 and thereby counteracts its antiviral effect by reducing its dNTP hydrolase activity. In Human herpesvirus 8 type P (isolate GK18) (HHV-8), this protein is Viral protein kinase (vPK).